The following is a 124-amino-acid chain: Small ribosomal subunit protein bS6 (124 aa).

The protein belongs to the bacterial ribosomal protein bS6 family.

Functionally, binds together with bS18 to 16S ribosomal RNA. The chain is Small ribosomal subunit protein bS6 from Rippkaea orientalis (strain PCC 8801 / RF-1) (Cyanothece sp. (strain PCC 8801)).